The chain runs to 317 residues: 4-hydroxy-3-methylbut-2-enyl diphosphate reductase (317 aa).

A [4Fe-4S] cluster-binding site is contributed by Cys12. (2E)-4-hydroxy-3-methylbut-2-enyl diphosphate is bound by residues His41 and His74. Dimethylallyl diphosphate is bound by residues His41 and His74. His41 and His74 together coordinate isopentenyl diphosphate. Cys96 serves as a coordination point for [4Fe-4S] cluster. His124 is a (2E)-4-hydroxy-3-methylbut-2-enyl diphosphate binding site. Dimethylallyl diphosphate is bound at residue His124. His124 is a binding site for isopentenyl diphosphate. Glu126 (proton donor) is an active-site residue. Thr168 contacts (2E)-4-hydroxy-3-methylbut-2-enyl diphosphate. Cys198 serves as a coordination point for [4Fe-4S] cluster. Residues Ser226, Ser227, Asn228, and Ser270 each coordinate (2E)-4-hydroxy-3-methylbut-2-enyl diphosphate. Positions 226, 227, 228, and 270 each coordinate dimethylallyl diphosphate. Residues Ser226, Ser227, Asn228, and Ser270 each contribute to the isopentenyl diphosphate site.

This sequence belongs to the IspH family. It depends on [4Fe-4S] cluster as a cofactor.

It catalyses the reaction isopentenyl diphosphate + 2 oxidized [2Fe-2S]-[ferredoxin] + H2O = (2E)-4-hydroxy-3-methylbut-2-enyl diphosphate + 2 reduced [2Fe-2S]-[ferredoxin] + 2 H(+). The enzyme catalyses dimethylallyl diphosphate + 2 oxidized [2Fe-2S]-[ferredoxin] + H2O = (2E)-4-hydroxy-3-methylbut-2-enyl diphosphate + 2 reduced [2Fe-2S]-[ferredoxin] + 2 H(+). The protein operates within isoprenoid biosynthesis; dimethylallyl diphosphate biosynthesis; dimethylallyl diphosphate from (2E)-4-hydroxy-3-methylbutenyl diphosphate: step 1/1. It functions in the pathway isoprenoid biosynthesis; isopentenyl diphosphate biosynthesis via DXP pathway; isopentenyl diphosphate from 1-deoxy-D-xylulose 5-phosphate: step 6/6. Catalyzes the conversion of 1-hydroxy-2-methyl-2-(E)-butenyl 4-diphosphate (HMBPP) into a mixture of isopentenyl diphosphate (IPP) and dimethylallyl diphosphate (DMAPP). Acts in the terminal step of the DOXP/MEP pathway for isoprenoid precursor biosynthesis. The sequence is that of 4-hydroxy-3-methylbut-2-enyl diphosphate reductase from Chromohalobacter salexigens (strain ATCC BAA-138 / DSM 3043 / CIP 106854 / NCIMB 13768 / 1H11).